The chain runs to 172 residues: 3-phenylpropionate/cinnamic acid dioxygenase subunit beta (172 aa).

Belongs to the bacterial ring-hydroxylating dioxygenase beta subunit family. This dioxygenase system consists of four proteins: the two subunits of the hydroxylase component (HcaE and HcaF), a ferredoxin (HcaC) and a ferredoxin reductase (HcaD).

It catalyses the reaction 3-phenylpropanoate + NADH + O2 + H(+) = 3-(cis-5,6-dihydroxycyclohexa-1,3-dien-1-yl)propanoate + NAD(+). The enzyme catalyses (E)-cinnamate + NADH + O2 + H(+) = (2E)-3-(cis-5,6-dihydroxycyclohexa-1,3-dien-1-yl)prop-2-enoate + NAD(+). It participates in aromatic compound metabolism; 3-phenylpropanoate degradation. Functionally, part of the multicomponent 3-phenylpropionate dioxygenase. Converts 3-phenylpropionic acid (PP) and cinnamic acid (CI) into 3-phenylpropionate-dihydrodiol (PP-dihydrodiol) and cinnamic acid-dihydrodiol (CI-dihydrodiol), respectively. This Escherichia coli O17:K52:H18 (strain UMN026 / ExPEC) protein is 3-phenylpropionate/cinnamic acid dioxygenase subunit beta.